Consider the following 143-residue polypeptide: Period circadian protein (143 aa).

A disordered region spans residues 25–130 (NSKPVTAPTQ…GPSLAADNSI (106 aa)). Low complexity-rich tracts occupy residues 71 to 93 (SGNC…ITGT) and 114 to 126 (GGAA…SLAA).

In terms of assembly, forms a heterodimer with timeless (TIM); the complex then translocates into the nucleus. Post-translationally, phosphorylated with a circadian rhythmicity, probably by the double-time protein (dbt). Phosphorylation could be implicated in the stability of per monomer and in the formation of heterodimer per-tim.

Its subcellular location is the nucleus. It localises to the cytoplasm. It is found in the perinuclear region. Functionally, essential for biological clock functions. Determines the period length of circadian and ultradian rhythms; an increase in PER dosage leads to shortened circadian rhythms and a decrease leads to lengthened circadian rhythms. Essential for the circadian rhythmicity of locomotor activity, eclosion behavior, and for the rhythmic component of the male courtship song that originates in the thoracic nervous system. The biological cycle depends on the rhythmic formation and nuclear localization of the TIM-PER complex. Light induces the degradation of TIM, which promotes elimination of PER. Nuclear activity of the heterodimer coordinatively regulates PER and TIM transcription through a negative feedback loop. Behaves as a negative element in circadian transcriptional loop. Does not appear to bind DNA, suggesting indirect transcriptional inhibition. The sequence is that of Period circadian protein (per) from Drosophila picticornis (Fruit fly).